A 118-amino-acid polypeptide reads, in one-letter code: Protein Rev (118 aa).

Residue S5 is modified to Phosphoserine; by host CK2. The interval 18 to 26 (LIKILYQSN) is homomultimerization. Residues 23 to 49 (YQSNPPPSPEGTRQARRNRRRRWRARQ) are disordered. The Nuclear localization signal and RNA-binding (RRE) signature appears at 34 to 50 (TRQARRNRRRRWRARQR). A compositionally biased stretch (basic residues) spans 36-49 (QARRNRRRRWRARQ). A Nuclear export signal and binding to XPO1 motif is present at residues 73-84 (LQLPPLERLNLN). The interval 89-118 (CGASGTQGVGSPQISVESPTVLESGTEEQC) is disordered. A phosphoserine; by host mark is found at S92 and S99. Residues 92 to 112 (SGTQGVGSPQISVESPTVLES) show a composition bias toward polar residues.

It belongs to the HIV-1 REV protein family. Homomultimer; when bound to the RRE. Multimeric assembly is essential for activity and may involve XPO1. Binds to human KPNB1, XPO1, TNPO1, RANBP5 and IPO7. Interacts with the viral Integrase. Interacts with human KHDRBS1. Interacts with human NAP1; this interaction decreases Rev multimerization and stimulates its activity. Interacts with human DEAD-box helicases DDX3 and DDX24; these interactions may serve for viral RNA export to the cytoplasm and packaging, respectively. Interacts with human PSIP1; this interaction may inhibit HIV-1 DNA integration by promoting dissociation of the Integrase-LEDGF/p75 complex. Asymmetrically arginine dimethylated at one site by host PRMT6. Methylation impairs the RNA-binding activity and export of viral RNA from the nucleus to the cytoplasm. Post-translationally, phosphorylated by protein kinase CK2. Presence of, and maybe binding to the N-terminus of the regulatory beta subunit of CK2 is necessary for CK2-mediated Rev's phosphorylation.

It localises to the host nucleus. It is found in the host nucleolus. Its subcellular location is the host cytoplasm. Escorts unspliced or incompletely spliced viral pre-mRNAs (late transcripts) out of the nucleus of infected cells. These pre-mRNAs carry a recognition sequence called Rev responsive element (RRE) located in the env gene, that is not present in fully spliced viral mRNAs (early transcripts). This function is essential since most viral proteins are translated from unspliced or partially spliced pre-mRNAs which cannot exit the nucleus by the pathway used by fully processed cellular mRNAs. Rev itself is translated from a fully spliced mRNA that readily exits the nucleus. Rev's nuclear localization signal (NLS) binds directly to KPNB1/Importin beta-1 without previous binding to KPNA1/Importin alpha-1. KPNB1 binds to the GDP bound form of RAN (Ran-GDP) and targets Rev to the nucleus. In the nucleus, the conversion from Ran-GDP to Ran-GTP dissociates Rev from KPNB1 and allows Rev's binding to the RRE in viral pre-mRNAs. Rev multimerization on the RRE via cooperative assembly exposes its nuclear export signal (NES) to the surface. Rev can then form a complex with XPO1/CRM1 and Ran-GTP, leading to nuclear export of the complex. Conversion from Ran-GTP to Ran-GDP mediates dissociation of the Rev/RRE/XPO1/RAN complex, so that Rev can return to the nucleus for a subsequent round of export. Beside KPNB1, also seems to interact with TNPO1/Transportin-1, RANBP5/IPO5 and IPO7/RANBP7 for nuclear import. The nucleoporin-like HRB/RIP is an essential cofactor that probably indirectly interacts with Rev to release HIV RNAs from the perinuclear region to the cytoplasm. This Human immunodeficiency virus type 1 group M subtype D (isolate Z2/CDC-Z34) (HIV-1) protein is Protein Rev.